Here is a 41-residue protein sequence, read N- to C-terminus: Photosystem I reaction center subunit IX (41 aa).

A helical membrane pass occupies residues 7–27 (YLSTAPVLLTIWLTFTAGFII).

It belongs to the PsaJ family.

It is found in the plastid. The protein resides in the chloroplast thylakoid membrane. Functionally, may help in the organization of the PsaE and PsaF subunits. The polypeptide is Photosystem I reaction center subunit IX (Phaeodactylum tricornutum (strain CCAP 1055/1)).